The chain runs to 218 residues: Ras-related protein RabO (218 aa).

15–22 (GDYCVGKT) contacts GTP. The short motif at 37-45 (RNCNIGVDF) is the Effector region element. Residues 63–67 (DTGGQ) and 122–125 (NKID) contribute to the GTP site. Position 215 is a cysteine methyl ester (Cys-215). Cys-215 carries the S-geranylgeranyl cysteine lipid modification. Residues 216 to 218 (FIL) constitute a propeptide, removed in mature form.

Belongs to the small GTPase superfamily. Rab family.

The protein resides in the cell membrane. The sequence is that of Ras-related protein RabO (rabO) from Dictyostelium discoideum (Social amoeba).